Here is an 871-residue protein sequence, read N- to C-terminus: DNA mismatch repair protein MutS (871 aa).

Residue Gly618–Ser625 coordinates ATP.

This sequence belongs to the DNA mismatch repair MutS family.

In terms of biological role, this protein is involved in the repair of mismatches in DNA. It is possible that it carries out the mismatch recognition step. This protein has a weak ATPase activity. The protein is DNA mismatch repair protein MutS of Christiangramia forsetii (strain DSM 17595 / CGMCC 1.15422 / KT0803) (Gramella forsetii).